We begin with the raw amino-acid sequence, 146 residues long: Hemoglobin subunit beta (146 aa).

V1 is subject to N-acetylvaline. A Globin domain is found at 2–146 (HLTAEEKAAV…VATALAHKYH (145 aa)). T12 is modified (phosphothreonine). S44 is subject to Phosphoserine. K59 carries the N6-acetyllysine modification. H63 is a binding site for heme b. K82 is subject to N6-acetyllysine. H92 lines the heme b pocket. C93 carries the S-nitrosocysteine modification. K144 bears the N6-acetyllysine mark.

This sequence belongs to the globin family. Heterotetramer of two alpha chains and two beta chains. In terms of tissue distribution, red blood cells.

In terms of biological role, involved in oxygen transport from the lung to the various peripheral tissues. This Mustela lutreola (European mink) protein is Hemoglobin subunit beta (HBB).